An 81-amino-acid polypeptide reads, in one-letter code: Acyl carrier protein (81 aa).

Positions 2–80 (ASKEEILAGL…DAVDFIDGAQ (79 aa)) constitute a Carrier domain. The residue at position 40 (Ser40) is an O-(pantetheine 4'-phosphoryl)serine.

This sequence belongs to the acyl carrier protein (ACP) family. 4'-phosphopantetheine is transferred from CoA to a specific serine of apo-ACP by AcpS. This modification is essential for activity because fatty acids are bound in thioester linkage to the sulfhydryl of the prosthetic group.

Its subcellular location is the cytoplasm. It participates in lipid metabolism; fatty acid biosynthesis. Its function is as follows. Carrier of the growing fatty acid chain in fatty acid biosynthesis. The chain is Acyl carrier protein from Micrococcus luteus (strain ATCC 4698 / DSM 20030 / JCM 1464 / CCM 169 / CCUG 5858 / IAM 1056 / NBRC 3333 / NCIMB 9278 / NCTC 2665 / VKM Ac-2230) (Micrococcus lysodeikticus).